The primary structure comprises 220 residues: Ribosomal RNA large subunit methyltransferase E (220 aa).

5 residues coordinate S-adenosyl-L-methionine: Gly-60, Trp-62, Asp-92, Asp-108, and Asp-133. Lys-173 (proton acceptor) is an active-site residue.

This sequence belongs to the class I-like SAM-binding methyltransferase superfamily. RNA methyltransferase RlmE family.

It is found in the cytoplasm. The catalysed reaction is uridine(2552) in 23S rRNA + S-adenosyl-L-methionine = 2'-O-methyluridine(2552) in 23S rRNA + S-adenosyl-L-homocysteine + H(+). Functionally, specifically methylates the uridine in position 2552 of 23S rRNA at the 2'-O position of the ribose in the fully assembled 50S ribosomal subunit. This is Ribosomal RNA large subunit methyltransferase E from Paraburkholderia xenovorans (strain LB400).